We begin with the raw amino-acid sequence, 322 residues long: Lymphatic vessel endothelial hyaluronic acid receptor 1 (322 aa).

The signal sequence occupies residues 1–19; it reads MARCFSLVLLLTSIWTTRL. The Extracellular segment spans residues 20 to 238; it reads LVQGSLRAEE…EAAGFGGVPT (219 aa). The region spanning 40-130 is the Link domain; sequence GITLVSKKAN…SRQFAAYCYN (91 aa). Asparagine 53 carries N-linked (GlcNAc...) asparagine glycosylation. 2 disulfide bridges follow: cysteine 61/cysteine 128 and cysteine 85/cysteine 106. N-linked (GlcNAc...) asparagine glycosylation occurs at asparagine 130. Residues 239–259 traverse the membrane as a helical segment; sequence ALLVLALLFFGAAAGLGFCYV. At 260 to 322 the chain is on the cytoplasmic side; that stretch reads KRYVKAFPFT…TTVRCLEAEV (63 aa). Basic and acidic residues predominate over residues 279 to 309; the sequence is ETKVVKEEKANDSNPNEESKKTDKNPEESKS. The disordered stretch occupies residues 279–322; that stretch reads ETKVVKEEKANDSNPNEESKKTDKNPEESKSPSKTTVRCLEAEV.

In terms of assembly, homodimer; disulfide-linked. Interacts with PDGFB and IGFBP3. Forms a transient ternary complex with PDGFB and PDGFRB in TGN. O-glycosylated. In terms of tissue distribution, mainly expressed in endothelial cells lining lymphatic vessels.

It is found in the cell membrane. Functionally, ligand-specific transporter trafficking between intracellular organelles (TGN) and the plasma membrane. Plays a role in autocrine regulation of cell growth mediated by growth regulators containing cell surface retention sequence binding (CRS). May act as a hyaluronan (HA) transporter, either mediating its uptake for catabolism within lymphatic endothelial cells themselves, or its transport into the lumen of afferent lymphatic vessels for subsequent re-uptake and degradation in lymph nodes. Binds to pericelluar hyaluronan matrices deposited on the surface of leukocytes and facilitates cell adhesion and migration through lymphatic endothelium. In Homo sapiens (Human), this protein is Lymphatic vessel endothelial hyaluronic acid receptor 1 (LYVE1).